The following is a 428-amino-acid chain: Aspartate--tRNA(Asp) ligase (428 aa).

Glu166 contributes to the L-aspartate binding site. The interval 188–191 is aspartate; sequence QLYK. Arg210 serves as a coordination point for L-aspartate. ATP contacts are provided by residues 210–212, 218–220, and Glu351; these read RAE and RHL. Glu351 and Ser354 together coordinate Mg(2+). Residues Ser354 and Arg358 each contribute to the L-aspartate site. Residue 399–402 coordinates ATP; the sequence is GLER.

This sequence belongs to the class-II aminoacyl-tRNA synthetase family. Type 2 subfamily. In terms of assembly, homodimer. Mg(2+) serves as cofactor.

The protein localises to the cytoplasm. It catalyses the reaction tRNA(Asp) + L-aspartate + ATP = L-aspartyl-tRNA(Asp) + AMP + diphosphate. Functionally, catalyzes the attachment of L-aspartate to tRNA(Asp) in a two-step reaction: L-aspartate is first activated by ATP to form Asp-AMP and then transferred to the acceptor end of tRNA(Asp). This is Aspartate--tRNA(Asp) ligase from Thermoplasma acidophilum (strain ATCC 25905 / DSM 1728 / JCM 9062 / NBRC 15155 / AMRC-C165).